A 114-amino-acid polypeptide reads, in one-letter code: Putative antiporter subunit mnhC2 (114 aa).

3 consecutive transmembrane segments (helical) span residues 3–23 (LILL…ILSI), 25–45 (LIRI…IIMS), and 72–92 (AIVL…LVLI).

This sequence belongs to the CPA3 antiporters (TC 2.A.63) subunit C family. May form a heterooligomeric complex that consists of seven subunits: mnhA2, mnhB2, mnhC2, mnhD2, mnhE2, mnhF2 and mnhG2.

The protein resides in the cell membrane. In Staphylococcus epidermidis (strain ATCC 12228 / FDA PCI 1200), this protein is Putative antiporter subunit mnhC2 (mnhC2).